The sequence spans 618 residues: Dihydroxy-acid dehydratase (618 aa).

Asp-81 is a Mg(2+) binding site. Cys-122 lines the [2Fe-2S] cluster pocket. The Mg(2+) site is built by Asp-123 and Lys-124. Lys-124 is modified (N6-carboxylysine). [2Fe-2S] cluster is bound at residue Cys-199. Residue Glu-495 coordinates Mg(2+). The active-site Proton acceptor is the Ser-521.

This sequence belongs to the IlvD/Edd family. In terms of assembly, homodimer. The cofactor is [2Fe-2S] cluster. Mg(2+) is required as a cofactor.

The enzyme catalyses (2R)-2,3-dihydroxy-3-methylbutanoate = 3-methyl-2-oxobutanoate + H2O. It carries out the reaction (2R,3R)-2,3-dihydroxy-3-methylpentanoate = (S)-3-methyl-2-oxopentanoate + H2O. It functions in the pathway amino-acid biosynthesis; L-isoleucine biosynthesis; L-isoleucine from 2-oxobutanoate: step 3/4. The protein operates within amino-acid biosynthesis; L-valine biosynthesis; L-valine from pyruvate: step 3/4. Functions in the biosynthesis of branched-chain amino acids. Catalyzes the dehydration of (2R,3R)-2,3-dihydroxy-3-methylpentanoate (2,3-dihydroxy-3-methylvalerate) into 2-oxo-3-methylpentanoate (2-oxo-3-methylvalerate) and of (2R)-2,3-dihydroxy-3-methylbutanoate (2,3-dihydroxyisovalerate) into 2-oxo-3-methylbutanoate (2-oxoisovalerate), the penultimate precursor to L-isoleucine and L-valine, respectively. The polypeptide is Dihydroxy-acid dehydratase (Blochmanniella floridana).